Consider the following 567-residue polypeptide: Malate synthase (567 aa).

The active-site Proton acceptor is the arginine 177. The Proton donor role is filled by aspartate 466. Residues 565 to 567 carry the Microbody targeting signal motif; sequence CKL.

The protein belongs to the malate synthase family.

The protein resides in the glyoxysome. It catalyses the reaction glyoxylate + acetyl-CoA + H2O = (S)-malate + CoA + H(+). It functions in the pathway carbohydrate metabolism; glyoxylate cycle; (S)-malate from isocitrate: step 2/2. This is Malate synthase from Oryza sativa subsp. japonica (Rice).